The chain runs to 916 residues: Translation initiation factor IF-2 (916 aa).

The segment at 50–326 (NRDKESTSQP…NSTLQQGFNK (277 aa)) is disordered. Positions 109–241 (AQREAEEKAR…LAEENAEKWT (133 aa)) are enriched in basic and acidic residues. Basic residues predominate over residues 277–291 (GRGRAAKAPRPKKNN). Positions 292-304 (RHSEKADREEARA) are enriched in basic and acidic residues. The region spanning 415-584 (SRAPVVTIMG…LLQAEVLELK (170 aa)) is the tr-type G domain. The interval 424–431 (GHVDHGKT) is G1. 424-431 (GHVDHGKT) contributes to the GTP binding site. The G2 stretch occupies residues 449–453 (GITQH). The tract at residues 470–473 (DTPG) is G3. Residues 470–474 (DTPGH) and 524–527 (NKID) contribute to the GTP site. A G4 region spans residues 524-527 (NKID). The segment at 560 to 562 (SAK) is G5.

This sequence belongs to the TRAFAC class translation factor GTPase superfamily. Classic translation factor GTPase family. IF-2 subfamily.

It is found in the cytoplasm. In terms of biological role, one of the essential components for the initiation of protein synthesis. Protects formylmethionyl-tRNA from spontaneous hydrolysis and promotes its binding to the 30S ribosomal subunits. Also involved in the hydrolysis of GTP during the formation of the 70S ribosomal complex. The sequence is that of Translation initiation factor IF-2 from Proteus mirabilis (strain HI4320).